Here is a 443-residue protein sequence, read N- to C-terminus: Nuclear distribution protein nudF (443 aa).

Positions 9 to 41 (QAEELHKSIIAYLSSINASRSCEVLREELQVDS) constitute a LisH domain. Residues 60–87 (TGIARLQKKILDLESKLAGLQTELDTIS) are a coiled coil. WD repeat units follow at residues 111-152 (SHRD…RTLK), 154-194 (HMRP…ANVR), 198-238 (GHDH…CVKV), 241-280 (SQGS…SVAS), 283-343 (GHEN…IKTL), 345-384 (GHDN…RLVK), 388-427 (AHGH…PGFQ), and 429-443 (VIAT…RIFT).

This sequence belongs to the WD repeat LIS1/nudF family. As to quaternary structure, self-associates. Interacts with nudE and dynein.

It localises to the cytoplasm. The protein localises to the cytoskeleton. It is found in the spindle pole. In terms of biological role, positively regulates the activity of the minus-end directed microtubule motor protein dynein. May enhance dynein-mediated microtubule sliding by targeting dynein to the microtubule plus end. Required for nuclear migration during vegetative growth as well as development. Required for retrograde early endosome (EE) transport from the hyphal tip. Required for localization of dynein to the mitotic spindle poles. Recruits additional proteins to the dynein complex at SPBs. The polypeptide is Nuclear distribution protein nudF (Aspergillus niger (strain ATCC MYA-4892 / CBS 513.88 / FGSC A1513)).